The sequence spans 377 residues: DNA-directed RNA polymerase subunit alpha (377 aa).

Residues 1–259 (MSDSSHNLLY…KHFSVFEKMD (259 aa)) are alpha N-terminal domain (alpha-NTD). Residues 276–377 (KDDILHKLVL…KIRLSKNTKG (102 aa)) form an alpha C-terminal domain (alpha-CTD) region.

The protein belongs to the RNA polymerase alpha chain family. Homodimer. The RNAP catalytic core consists of 2 alpha, 1 beta, 1 beta' and 1 omega subunit. When a sigma factor is associated with the core the holoenzyme is formed, which can initiate transcription.

It carries out the reaction RNA(n) + a ribonucleoside 5'-triphosphate = RNA(n+1) + diphosphate. In terms of biological role, DNA-dependent RNA polymerase catalyzes the transcription of DNA into RNA using the four ribonucleoside triphosphates as substrates. This chain is DNA-directed RNA polymerase subunit alpha, found in Chlamydia trachomatis serovar A (strain ATCC VR-571B / DSM 19440 / HAR-13).